A 340-amino-acid polypeptide reads, in one-letter code: MTDHALLLVNLGSPASTQVADVRSYLNQFLMDPYVIDIPWPLRRLLVSLILIKRPEQSAHAYASIWWDEGSPLVVLSKRLQQAMKKEWSHGPVELAMRYGEPSIETVLTRLSEQGFKKVTLAPLYPQFADSTVTTVIEEAKRVVRAKSLKMQFSVLQPFYDQPEYVSALVESVRPHLEQPYDHLLLSFHGLPERHLHKRDPTGKHCLKDDCCMTAPAQVVATCYRAQCLQSAAAFAKRMGIPDGKWSVSFQSRLGRAKWIEPYTEARLDELAAQGVKKLLVMCPAFVADCIETLEEIGDRGAEQFKEAGGEELILVPCLNDDPNWAKELNRLCERAPLML.

Fe cation is bound by residues H189 and E292.

This sequence belongs to the ferrochelatase family.

It localises to the cytoplasm. The enzyme catalyses heme b + 2 H(+) = protoporphyrin IX + Fe(2+). The protein operates within porphyrin-containing compound metabolism; protoheme biosynthesis; protoheme from protoporphyrin-IX: step 1/1. Catalyzes the ferrous insertion into protoporphyrin IX. The sequence is that of Ferrochelatase from Pseudomonas syringae pv. tomato (strain ATCC BAA-871 / DC3000).